A 125-amino-acid polypeptide reads, in one-letter code: MWSVQKLLWGCRSLLPQGCRSFSLGNRDLRKVDFMPQPKNTDRWDNKRALYGVYDNIGILGDFKAHPRDLIIGPFWLRGWKGNELQRCIRKRQMVGPRMFYQDRENLTKRIRFLYKRFNRYGKHR.

A mitochondrion-targeting transit peptide spans Met1–Leu29.

This sequence belongs to the mitochondrion-specific ribosomal protein mL51 family. As to quaternary structure, component of the mitochondrial ribosome large subunit (39S) which comprises a 16S rRNA and about 50 distinct proteins.

It is found in the mitochondrion. The sequence is that of Large ribosomal subunit protein mL51 (mrpl51) from Xenopus laevis (African clawed frog).